Here is a 310-residue protein sequence, read N- to C-terminus: Acetylglutamate kinase (310 aa).

Residues 74 to 75 (GG), Arg96, and Asn201 contribute to the substrate site.

It belongs to the acetylglutamate kinase family. ArgB subfamily.

It is found in the cytoplasm. It catalyses the reaction N-acetyl-L-glutamate + ATP = N-acetyl-L-glutamyl 5-phosphate + ADP. It participates in amino-acid biosynthesis; L-arginine biosynthesis; N(2)-acetyl-L-ornithine from L-glutamate: step 2/4. Its function is as follows. Catalyzes the ATP-dependent phosphorylation of N-acetyl-L-glutamate. This chain is Acetylglutamate kinase, found in Arthrobacter sp. (strain FB24).